Reading from the N-terminus, the 372-residue chain is uncharacterized protein (372 aa).

4–18 (YIIVGAGILGASTAY) is an FAD binding site.

Belongs to the DadA oxidoreductase family. Requires FAD as cofactor.

This is an uncharacterized protein from Bacillus subtilis (strain 168).